Here is a 368-residue protein sequence, read N- to C-terminus: 1-deoxy-D-xylulose 5-phosphate reductoisomerase (368 aa).

NADPH contacts are provided by threonine 7, glycine 8, serine 9, isoleucine 10, glycine 31, lysine 32, asparagine 33, and asparagine 113. Lysine 114 contributes to the 1-deoxy-D-xylulose 5-phosphate binding site. Glutamate 115 serves as a coordination point for NADPH. Residue aspartate 133 participates in Mn(2+) binding. Residues serine 134, glutamate 135, serine 158, and histidine 181 each contribute to the 1-deoxy-D-xylulose 5-phosphate site. Residue glutamate 135 coordinates Mn(2+). An NADPH-binding site is contributed by glycine 187. Residues serine 194, asparagine 199, lysine 200, and glutamate 203 each coordinate 1-deoxy-D-xylulose 5-phosphate. Glutamate 203 is a binding site for Mn(2+).

The protein belongs to the DXR family. Requires Mg(2+) as cofactor. The cofactor is Mn(2+).

It carries out the reaction 2-C-methyl-D-erythritol 4-phosphate + NADP(+) = 1-deoxy-D-xylulose 5-phosphate + NADPH + H(+). It participates in isoprenoid biosynthesis; isopentenyl diphosphate biosynthesis via DXP pathway; isopentenyl diphosphate from 1-deoxy-D-xylulose 5-phosphate: step 1/6. Catalyzes the NADPH-dependent rearrangement and reduction of 1-deoxy-D-xylulose-5-phosphate (DXP) to 2-C-methyl-D-erythritol 4-phosphate (MEP). This chain is 1-deoxy-D-xylulose 5-phosphate reductoisomerase, found in Helicobacter pylori (strain HPAG1).